A 280-amino-acid chain; its full sequence is MLSYRHSFHAGNHADVLKHTVQSLIIESLKEKDKPFLYLDTHAGAGRYQLGSEHAERTGEYLEGIARIWQQDDLPAELEAYINVVKHFNRSGQLRYYPGSPLIARLLLREQDSLQLTELHPSDYPLLRSEFQKDSRARVEKADGFQQLKAKLPPVSRRGLILIDPPYEMKTDYQAVVSGIAEGYKRFATGIYALWYPVVLRQQIKRMIHDLEATGIRKILQIELAVLPDSDRRGMTASGMIVINPPWKLEQQMNNVLPWLHSKLVPAGTGHATVSWIVPE.

S-adenosyl-L-methionine-binding positions include His19, His42, Ser100, Glu118, Asp143–Gly144, and Asp164. Asp164 functions as the Proton acceptor in the catalytic mechanism.

Belongs to the RlmJ family. Monomer.

It catalyses the reaction adenosine(2030) in 23S rRNA + S-adenosyl-L-methionine = N(6)-methyladenosine(2030) in 23S rRNA + S-adenosyl-L-homocysteine + H(+). Specifically methylates the adenine in position 2030 of 23S rRNA. Nascent 23S rRNA seems to be the natural substrate. Appears to be not necessary for ribosome assembly. Required for the utilization of extracellular DNA as the sole source of carbon and energy. This chain is Ribosomal RNA large subunit methyltransferase J, found in Escherichia coli (strain K12).